Here is an 84-residue protein sequence, read N- to C-terminus: U21-theraphotoxin-Cg1a 2 (84 aa).

An N-terminal signal peptide occupies residues 1–21; it reads MKVSVLITLAVLGVMFLFTSA. The propeptide occupies 22 to 47; that stretch reads EERGSDQMDSPAWLKSMEIIFQSEER. 3 disulfides stabilise this stretch: cysteine 49/cysteine 63, cysteine 56/cysteine 68, and cysteine 62/cysteine 76. Valine 82 is subject to Valine amide.

Belongs to the neurotoxin 10 (Hwtx-1) family. 05 (F4a) subfamily. As to expression, expressed by the venom gland.

It localises to the secreted. In terms of biological role, probable ion channel inhibitor. The sequence is that of U21-theraphotoxin-Cg1a 2 from Chilobrachys guangxiensis (Chinese earth tiger tarantula).